The following is a 370-amino-acid chain: tRNA-specific 2-thiouridylase MnmA (370 aa).

ATP-binding positions include 9-16 (GMSGGVDS) and Met35. The interaction with target base in tRNA stretch occupies residues 95–97 (NPD). Catalysis depends on Cys100, which acts as the Nucleophile. The cysteines at positions 100 and 196 are disulfide-linked. Residue Gly124 coordinates ATP. The tract at residues 146–148 (KDQ) is interaction with tRNA. Catalysis depends on Cys196, which acts as the Cysteine persulfide intermediate. The segment at 308-309 (RY) is interaction with tRNA.

Belongs to the MnmA/TRMU family.

The protein localises to the cytoplasm. The catalysed reaction is S-sulfanyl-L-cysteinyl-[protein] + uridine(34) in tRNA + AH2 + ATP = 2-thiouridine(34) in tRNA + L-cysteinyl-[protein] + A + AMP + diphosphate + H(+). In terms of biological role, catalyzes the 2-thiolation of uridine at the wobble position (U34) of tRNA, leading to the formation of s(2)U34. The protein is tRNA-specific 2-thiouridylase MnmA of Ralstonia nicotianae (strain ATCC BAA-1114 / GMI1000) (Ralstonia solanacearum).